The chain runs to 20 residues: Acidic phospholipase A2 CbIbeta (20 aa).

The protein belongs to the phospholipase A2 family. Group II subfamily. D49 sub-subfamily. As to quaternary structure, heterodimer of an acidic subunit (CbIalpha or CbIbeta) and a basic subunit (CbII). The acidic subunit (CbI) is non-toxic, and increases the toxicity of the basic subunit (CbII). It depends on Ca(2+) as a cofactor. Contains 7 disulfide bonds. As to expression, expressed by the venom gland.

The protein localises to the secreted. The catalysed reaction is a 1,2-diacyl-sn-glycero-3-phosphocholine + H2O = a 1-acyl-sn-glycero-3-phosphocholine + a fatty acid + H(+). Heterodimer: presynaptic neurotoxin. Functionally, monomer: Snake venom phospholipase A2 (PLA2) is inactive towards micellar phosphatidylcholine but is weakly active towards non-micellar dithiolecithin. PLA2 catalyzes the calcium-dependent hydrolysis of the 2-acyl groups in 3-sn-phosphoglycerides. In Pseudocerastes fieldi (Field's horned viper), this protein is Acidic phospholipase A2 CbIbeta.